The primary structure comprises 384 residues: Glutamate 5-kinase (384 aa).

Residue K24 coordinates ATP. Residues S64, D149, and N161 each contribute to the substrate site. ATP contacts are provided by residues 181 to 182 (TD) and 223 to 229 (TGGMRTK). One can recognise a PUA domain in the interval 288-370 (PGAILIDAGA…RDIQPLLGYT (83 aa)).

This sequence belongs to the glutamate 5-kinase family.

The protein localises to the cytoplasm. The catalysed reaction is L-glutamate + ATP = L-glutamyl 5-phosphate + ADP. Its pathway is amino-acid biosynthesis; L-proline biosynthesis; L-glutamate 5-semialdehyde from L-glutamate: step 1/2. Catalyzes the transfer of a phosphate group to glutamate to form L-glutamate 5-phosphate. The protein is Glutamate 5-kinase of Xylella fastidiosa (strain 9a5c).